The chain runs to 513 residues: Histidine ammonia-lyase (513 aa).

Residues 144–146 constitute a cross-link (5-imidazolinone (Ala-Gly)); sequence ASG. At serine 145 the chain carries 2,3-didehydroalanine (Ser).

The protein belongs to the PAL/histidase family. In terms of processing, contains an active site 4-methylidene-imidazol-5-one (MIO), which is formed autocatalytically by cyclization and dehydration of residues Ala-Ser-Gly.

Its subcellular location is the cytoplasm. The catalysed reaction is L-histidine = trans-urocanate + NH4(+). It participates in amino-acid degradation; L-histidine degradation into L-glutamate; N-formimidoyl-L-glutamate from L-histidine: step 1/3. The polypeptide is Histidine ammonia-lyase (Streptococcus sanguinis (strain SK36)).